The chain runs to 953 residues: Isoleucine--tRNA ligase (953 aa).

Residues 57–67 carry the 'HIGH' region motif; sequence PYANGDIHIGH. Glu-582 serves as a coordination point for L-isoleucyl-5'-AMP. The 'KMSKS' region signature appears at 623–627; that stretch reads KMSKS. Lys-626 serves as a coordination point for ATP. Positions 916, 919, 936, and 939 each coordinate Zn(2+).

Belongs to the class-I aminoacyl-tRNA synthetase family. IleS type 1 subfamily. As to quaternary structure, monomer. Zn(2+) is required as a cofactor.

It is found in the cytoplasm. The enzyme catalyses tRNA(Ile) + L-isoleucine + ATP = L-isoleucyl-tRNA(Ile) + AMP + diphosphate. Catalyzes the attachment of isoleucine to tRNA(Ile). As IleRS can inadvertently accommodate and process structurally similar amino acids such as valine, to avoid such errors it has two additional distinct tRNA(Ile)-dependent editing activities. One activity is designated as 'pretransfer' editing and involves the hydrolysis of activated Val-AMP. The other activity is designated 'posttransfer' editing and involves deacylation of mischarged Val-tRNA(Ile). The sequence is that of Isoleucine--tRNA ligase from Bordetella parapertussis (strain 12822 / ATCC BAA-587 / NCTC 13253).